Reading from the N-terminus, the 346-residue chain is Protein RecA (346 aa).

67–74 (GPESSGKT) contributes to the ATP binding site.

It belongs to the RecA family.

It localises to the cytoplasm. Functionally, can catalyze the hydrolysis of ATP in the presence of single-stranded DNA, the ATP-dependent uptake of single-stranded DNA by duplex DNA, and the ATP-dependent hybridization of homologous single-stranded DNAs. It interacts with LexA causing its activation and leading to its autocatalytic cleavage. The protein is Protein RecA of Saccharopolyspora erythraea (strain ATCC 11635 / DSM 40517 / JCM 4748 / NBRC 13426 / NCIMB 8594 / NRRL 2338).